Here is a 147-residue protein sequence, read N- to C-terminus: UPF0275 protein PM0504 (147 aa).

This sequence belongs to the UPF0275 family.

The polypeptide is UPF0275 protein PM0504 (Pasteurella multocida (strain Pm70)).